The chain runs to 576 residues: MNSLLHHSFLKTVFSSLAIAIVTSSLSSVTIAATHPLDNHPKGEIAASSETAHNPWSGTRLIVAISVDQFSSDLFSEYRGRFRSGMKQLQNGVVYPMAYHSHAATETCPGHSVLLTGDHPARTGIIANNWYDFSVKRADKKVYCSEDPSLSADPQNYQPSVHYLKVPTLGDRMKKANPHSRVISVAGKDRAAIMMGGHMTDQIWFWSDNAYKTLADHKGEMPVTVKTVNEQVTRFMQQDEAPVMPSVCADHASALKIGNNRIIGLAPASRKAGDFKTFRVTPDYDRTTTDIAIGLIDELKLGHGNAPDLLTVSLSATDAVGHAYGTEGAEMCSQMAGLDDNIARIIAALDSNGVPYVLVLTADHGGQDVPERAKLRGVETAQRVDPALSPDQLSLRLAERFQLSHNQPLFFANEPQGDWYINRNLPEQTKAQLIQAAKSELSNHPQVAAVFTASELTHIPYPTRSPELWNLAERAKASFDPLRSGDLIVLLKPRVTPIAKPVSYVATHGSAWDYDRRVPIIFYTPHASGFEQPMPVETVDIMPSLAALLQIPLRKGEVDGRCLDLDPTEATTCPVK.

Residues 1-32 form the signal peptide; sequence MNSLLHHSFLKTVFSSLAIAIVTSSLSSVTIA. Asp68 and Thr107 together coordinate Zn(2+). Catalysis depends on Thr107, which acts as the Phosphothreonine intermediate. Residues Cys108 and Cys144 are joined by a disulfide bond. Residues Asn128 and 188-190 each bind substrate; that span reads KDR. A disulfide bond links Cys248 and Cys332. The Zn(2+) site is built by Asp318, His322, Asp363, His364, and His508. Cys562 and Cys573 are oxidised to a cystine.

Monomer. It depends on Zn(2+) as a cofactor.

The catalysed reaction is a phosphate monoester + H2O = an alcohol + phosphate. Alkaline phosphatase with broad substrate specificity. Has phosphatase activity towards nucleotide and sugar phosphates with a preference to nucleotide phosphates. Has no phosphodiesterase activity. In Zymomonas mobilis subsp. mobilis (strain ATCC 31821 / ZM4 / CP4), this protein is Alkaline phosphatase PhoD.